Reading from the N-terminus, the 832-residue chain is AP-1 complex subunit gamma-1 (832 aa).

The GAE domain maps to 733–832 (LNVYASLLSA…QFDHKFDETL (100 aa)).

In terms of assembly, adapter protein complex 1 (AP-1) is a heterotetramer composed of two large adaptins (gamma-type subunit APL4 and beta-type subunit APL2), a medium adaptin (mu-type subunit APM1) and a small adaptin (sigma-type subunit APS1). AP-1 interacts with clathrin. Also a component of the AP-1R complex composed of at least APM2, APL4 and APS1.

The protein localises to the cytoplasm. The protein resides in the golgi apparatus membrane. It localises to the cytoplasmic vesicle. It is found in the clathrin-coated vesicle membrane. Functionally, adaptins are components of the adapter complexes which link clathrin to receptors in coated vesicles. Clathrin-associated protein complexes are believed to interact with the cytoplasmic tails of membrane proteins, leading to their selection and concentration. The AP-1 complex interacts directly with clathrin. Component of the AP-1-related (AP-1R) complex, an adapter protein complex that mediates sorting of cargo SNARE SNC1. In contrast to the APM1-containing AP-1 complex, AP-1R is incapable of sorting CHS3. In Saccharomyces cerevisiae (strain ATCC 204508 / S288c) (Baker's yeast), this protein is AP-1 complex subunit gamma-1 (APL4).